The sequence spans 235 residues: Casparian strip membrane protein 2 (235 aa).

Over 1-70 (MTSESATVIQ…RSGAEGFRRC (70 aa)) the chain is Cytoplasmic. The helical transmembrane segment at 71 to 91 (LAVIDFLLRVAAFGPTLAAAI) threads the bilayer. Residues 92 to 118 (STGTADERLSVFTNFFQFHARFDDFPA) are Extracellular-facing. Residues 119–139 (FTFFLVANAVAAGYLVLSLPF) traverse the membrane as a helical segment. Residues 140-162 (SVVVILRPNKATGGVRLLLLLCD) are Cytoplasmic-facing. The helical transmembrane segment at 163 to 183 (VLIMALLTAAGAAAAAIVYVA) threads the bilayer. The Extracellular portion of the chain corresponds to 184–210 (HSGNRRANWVPICMQFHGFCQRTSGSV). The helical transmembrane segment at 211 to 231 (VATFLAVLVFIVLILMAACVI) threads the bilayer. Residues 232-235 (RRSK) are Cytoplasmic-facing.

The protein belongs to the Casparian strip membrane proteins (CASP) family. Homodimer and heterodimers.

The protein localises to the cell membrane. Regulates membrane-cell wall junctions and localized cell wall deposition. Required for establishment of the Casparian strip membrane domain (CSD) and the subsequent formation of Casparian strips, a cell wall modification of the root endodermis that determines an apoplastic barrier between the intraorganismal apoplasm and the extraorganismal apoplasm and prevents lateral diffusion. This is Casparian strip membrane protein 2 from Sorghum bicolor (Sorghum).